The primary structure comprises 214 residues: Large ribosomal subunit protein uL4c (214 aa).

Positions 43-80 are disordered; sequence KQSNEKRQGSANTKTRSEVRGGGRKPWRQKGTGRARAG. Residues 64–75 show a composition bias toward basic residues; sequence GGRKPWRQKGTG.

The protein belongs to the universal ribosomal protein uL4 family. In terms of assembly, part of the 50S ribosomal subunit.

It is found in the plastid. It localises to the chloroplast. Probably binds the 23S rRNA. The polypeptide is Large ribosomal subunit protein uL4c (rpl4) (Porphyra purpurea (Red seaweed)).